We begin with the raw amino-acid sequence, 339 residues long: MSENNQSNQNNQINKIIKSTIEEIEKKFGNESIMLLGQKEKCDVDVFSSGSYAINSALGIGGFPKGRIIEIFGPESSGKTTIALHTIAEIQKKNGFAAFIDVEHSIDPVYAKNLGIDIDNLLISQPDSGEQALEIVDILAKSGSIDLIVVDSVAALVPEAELNGEMKDQSIGLQARLMSKALRKITGSLSKNKTSVIFINQVREKIGVVFGNPETTPGGRALKFYASIRLDVRKSTNIMLNNDISGNQIRVKVVKNKLAPPFKIAETEIIFSKGINKFGEVADLALVHDVLQKKGAWFSYNGNNIAQGRQKLIAQLESNNELFEEIFQKIVEKENQKLS.

73–80 (GPESSGKT) provides a ligand contact to ATP.

This sequence belongs to the RecA family.

Its subcellular location is the cytoplasm. Its function is as follows. Can catalyze the hydrolysis of ATP in the presence of single-stranded DNA, the ATP-dependent uptake of single-stranded DNA by duplex DNA, and the ATP-dependent hybridization of homologous single-stranded DNAs. It interacts with LexA causing its activation and leading to its autocatalytic cleavage. The sequence is that of Protein RecA from Mycoplasmopsis pulmonis (strain UAB CTIP) (Mycoplasma pulmonis).